A 427-amino-acid polypeptide reads, in one-letter code: MTEAMKITLSTQPADARWGEKATYSINNDGIILHLNGADDLGLIQRAARKIDGLGIKHVQLSGESWDADRCWAFWQGYKAPKGTRKVEWPDLDDAQRQELDNRLMIIDWVRDTINAPAEELGPSQLAQRAVDLISNVAGDRVTYRITKGEDLREQGYMGLHTVGRGSERSPVLLALDYNPTGDKEAPVYACLVGKGITFDSGGYSIKQTAFMDSMKSDMGGAATVTGALAFAITRGLNKRVKLFLCCADNLISGNAFKLGDIITYRNGKKVEVMNTDAEGRLVLADGLIDASAQKPELIIDAATLTGAAKTALGNDYHALFSFDDALAGRLLASASQENEPFWRLPLAEFHRSQLPSNFAELNNTGSAAYPAGASTAAGFLSHFVENYQQGWLHIDCSATYRKAPVEQWSAGATGLGVRTIANLLTA.

Mn(2+)-binding residues include Lys-195 and Asp-200. Residue Lys-207 is part of the active site. Mn(2+) contacts are provided by Asp-218, Asp-277, and Glu-279. Arg-281 is a catalytic residue.

Belongs to the peptidase M17 family. As to quaternary structure, homohexamer. Mn(2+) serves as cofactor.

The protein resides in the cytoplasm. The catalysed reaction is Release of an N-terminal amino acid, Xaa, from a peptide or arylamide. Xaa is preferably Glu or Asp but may be other amino acids, including Leu, Met, His, Cys and Gln.. Functionally, probably plays an important role in intracellular peptide degradation. The chain is Peptidase B from Shigella dysenteriae serotype 1 (strain Sd197).